The chain runs to 265 residues: Tryptophan synthase alpha chain (265 aa).

Active-site proton acceptor residues include Glu49 and Asp60.

It belongs to the TrpA family. As to quaternary structure, tetramer of two alpha and two beta chains.

It carries out the reaction (1S,2R)-1-C-(indol-3-yl)glycerol 3-phosphate + L-serine = D-glyceraldehyde 3-phosphate + L-tryptophan + H2O. Its pathway is amino-acid biosynthesis; L-tryptophan biosynthesis; L-tryptophan from chorismate: step 5/5. The alpha subunit is responsible for the aldol cleavage of indoleglycerol phosphate to indole and glyceraldehyde 3-phosphate. This is Tryptophan synthase alpha chain from Cupriavidus metallidurans (strain ATCC 43123 / DSM 2839 / NBRC 102507 / CH34) (Ralstonia metallidurans).